Reading from the N-terminus, the 274-residue chain is Large ribosomal subunit protein uL2 (274 aa).

A disordered region spans residues 222-274 (GVAMNPVDHPHGGGEGRGKGHHPQSPWGQLAKGYKTRRGKKASDKLIVRRRNG). Basic and acidic residues predominate over residues 229–239 (DHPHGGGEGRG).

Belongs to the universal ribosomal protein uL2 family. As to quaternary structure, part of the 50S ribosomal subunit. Forms a bridge to the 30S subunit in the 70S ribosome.

One of the primary rRNA binding proteins. Required for association of the 30S and 50S subunits to form the 70S ribosome, for tRNA binding and peptide bond formation. It has been suggested to have peptidyltransferase activity; this is somewhat controversial. Makes several contacts with the 16S rRNA in the 70S ribosome. The chain is Large ribosomal subunit protein uL2 from Thermosipho melanesiensis (strain DSM 12029 / CIP 104789 / BI429).